The sequence spans 451 residues: Tubulin alpha-3 chain (451 aa).

Glutamine 11 provides a ligand contact to GTP. The residue at position 40 (lysine 40) is an N6-acetyllysine. GTP contacts are provided by glutamate 71, glycine 144, threonine 145, threonine 179, asparagine 206, and asparagine 228. Residue glutamate 71 coordinates Mg(2+). The active site involves glutamate 254.

This sequence belongs to the tubulin family. In terms of assembly, dimer of alpha and beta chains. A typical microtubule is a hollow water-filled tube with an outer diameter of 25 nm and an inner diameter of 15 nM. Alpha-beta heterodimers associate head-to-tail to form protofilaments running lengthwise along the microtubule wall with the beta-tubulin subunit facing the microtubule plus end conferring a structural polarity. Microtubules usually have 13 protofilaments but different protofilament numbers can be found in some organisms and specialized cells. Mg(2+) is required as a cofactor. In terms of processing, undergoes a tyrosination/detyrosination cycle, the cyclic removal and re-addition of a C-terminal tyrosine residue by the enzymes tubulin tyrosine carboxypeptidase (TTCP) and tubulin tyrosine ligase (TTL), respectively. Post-translationally, acetylation of alpha chains at Lys-40 stabilizes microtubules and affects affinity and processivity of microtubule motors. This modification has a role in multiple cellular functions, ranging from cell motility, cell cycle progression or cell differentiation to intracellular trafficking and signaling.

It localises to the cytoplasm. The protein localises to the cytoskeleton. The catalysed reaction is GTP + H2O = GDP + phosphate + H(+). In terms of biological role, tubulin is the major constituent of microtubules, a cylinder consisting of laterally associated linear protofilaments composed of alpha- and beta-tubulin heterodimers. Microtubules grow by the addition of GTP-tubulin dimers to the microtubule end, where a stabilizing cap forms. Below the cap, tubulin dimers are in GDP-bound state, owing to GTPase activity of alpha-tubulin. The sequence is that of Tubulin alpha-3 chain (TUBA3) from Hordeum vulgare (Barley).